Here is a 332-residue protein sequence, read N- to C-terminus: L-lactate dehydrogenase (332 aa).

Residues 29-57 and R99 each bind NAD(+); that span reads GQVG…CADK. Positions 106, 138, and 169 each coordinate substrate. N138 is an NAD(+) binding site. Residue H193 is the Proton acceptor of the active site. Residue T248 participates in substrate binding.

It belongs to the LDH/MDH superfamily. LDH family. Homotetramer.

It is found in the cytoplasm. The catalysed reaction is (S)-lactate + NAD(+) = pyruvate + NADH + H(+). It functions in the pathway fermentation; pyruvate fermentation to lactate; (S)-lactate from pyruvate: step 1/1. The protein is L-lactate dehydrogenase of Drosophila melanogaster (Fruit fly).